The chain runs to 310 residues: Lipoyl synthase (310 aa).

Residues cysteine 54, cysteine 59, cysteine 65, cysteine 80, cysteine 84, cysteine 87, and serine 295 each contribute to the [4Fe-4S] cluster site. The Radical SAM core domain occupies 66–284; sequence FASGTATFLI…LFGEDNLGFM (219 aa).

This sequence belongs to the radical SAM superfamily. Lipoyl synthase family. [4Fe-4S] cluster serves as cofactor.

Its subcellular location is the cytoplasm. The catalysed reaction is [[Fe-S] cluster scaffold protein carrying a second [4Fe-4S](2+) cluster] + N(6)-octanoyl-L-lysyl-[protein] + 2 oxidized [2Fe-2S]-[ferredoxin] + 2 S-adenosyl-L-methionine + 4 H(+) = [[Fe-S] cluster scaffold protein] + N(6)-[(R)-dihydrolipoyl]-L-lysyl-[protein] + 4 Fe(3+) + 2 hydrogen sulfide + 2 5'-deoxyadenosine + 2 L-methionine + 2 reduced [2Fe-2S]-[ferredoxin]. It participates in protein modification; protein lipoylation via endogenous pathway; protein N(6)-(lipoyl)lysine from octanoyl-[acyl-carrier-protein]: step 2/2. Catalyzes the radical-mediated insertion of two sulfur atoms into the C-6 and C-8 positions of the octanoyl moiety bound to the lipoyl domains of lipoate-dependent enzymes, thereby converting the octanoylated domains into lipoylated derivatives. This chain is Lipoyl synthase, found in Prochlorococcus marinus (strain MIT 9215).